The following is a 270-amino-acid chain: Energy-coupling factor transporter ATP-binding protein EcfA (270 aa).

In terms of domain architecture, ABC transporter spans 5 to 238 (VEIENLTFFY…QLLEQNGLKA (234 aa)). 38 to 45 (GHNGAGKS) is a binding site for ATP.

The protein belongs to the ABC transporter superfamily. Energy-coupling factor EcfA family. Forms a stable energy-coupling factor (ECF) transporter complex composed of 2 membrane-embedded substrate-binding proteins (S component), 2 ATP-binding proteins (A component) and 2 transmembrane proteins (T component).

The protein localises to the cell membrane. Its function is as follows. ATP-binding (A) component of a common energy-coupling factor (ECF) ABC-transporter complex. Unlike classic ABC transporters this ECF transporter provides the energy necessary to transport a number of different substrates. This is Energy-coupling factor transporter ATP-binding protein EcfA from Carboxydothermus hydrogenoformans (strain ATCC BAA-161 / DSM 6008 / Z-2901).